Here is a 122-residue protein sequence, read N- to C-terminus: Small ribosomal subunit protein uS13 (122 aa).

The interval 99 to 122 is disordered; sequence RGQRTHTNARTRKGPAKAIAGKKK.

The protein belongs to the universal ribosomal protein uS13 family. In terms of assembly, part of the 30S ribosomal subunit. Forms a loose heterodimer with protein S19. Forms two bridges to the 50S subunit in the 70S ribosome.

Its function is as follows. Located at the top of the head of the 30S subunit, it contacts several helices of the 16S rRNA. In the 70S ribosome it contacts the 23S rRNA (bridge B1a) and protein L5 of the 50S subunit (bridge B1b), connecting the 2 subunits; these bridges are implicated in subunit movement. Contacts the tRNAs in the A and P-sites. This is Small ribosomal subunit protein uS13 from Bradyrhizobium sp. (strain ORS 278).